Consider the following 123-residue polypeptide: cAMP-responsive element-binding protein-like 2 (123 aa).

The disordered stretch occupies residues 1-24; the sequence is MDDSKVVGGKVKKPGKRGRKPAKI. Residues 10–21 show a composition bias toward basic residues; it reads KVKKPGKRGRKP. The region spanning 23 to 86 is the bZIP domain; it reads KIDLKAKLER…MAMDQGKIPS (64 aa). Residues 29–60 are basic motif; it reads KLERSRQSARECRARKKLRYQYLEELVSSRER. Positions 62 to 69 are leucine-zipper; the sequence is ICALREEL. Residues 93-123 form a disordered region; the sequence is TGEEQNKSQQNSSRHPKAGKTDANTNSLVGN. Residues 114–123 show a composition bias toward polar residues; it reads DANTNSLVGN.

This sequence belongs to the bZIP family. ATF subfamily. As to quaternary structure, interacts with CREB1; regulates CREB1 phosphorylation, stability and transcriptional activity. Phosphorylated by AMPK.

The protein localises to the nucleus. Its function is as follows. Probable regulator of CREB1 transcriptional activity which is involved in adipose cells differentiation. May also play a regulatory role in the cell cycle. The sequence is that of cAMP-responsive element-binding protein-like 2 (Crebl2) from Rattus norvegicus (Rat).